The primary structure comprises 23 residues: Potassium channel toxin alpha-KTx 13.4 (23 aa).

Disulfide bonds link C2–C15, C5–C20, and C9–C22. Positions 13-20 (GKCINGKC) are interaction with Ca(2+)-activated K(+) channels. At Y23 the chain carries Tyrosine amide.

As to expression, expressed by the venom gland.

It localises to the secreted. Functionally, blocks the potassium channel Shaker B. This chain is Potassium channel toxin alpha-KTx 13.4, found in Tityus stigmurus (Brazilian scorpion).